Reading from the N-terminus, the 162-residue chain is UPF0114 protein SO_3997 (162 aa).

A run of 3 helical transmembrane segments spans residues 10–32 (YASRWIMAPIYLGLSLVLLGLGI), 53–75 (LVLVTLSLIDITLVGGLIVMVMF), and 136–156 (IMWYLLIHITFVLSAFAMGYL).

Belongs to the UPF0114 family.

It localises to the cell membrane. This Shewanella oneidensis (strain ATCC 700550 / JCM 31522 / CIP 106686 / LMG 19005 / NCIMB 14063 / MR-1) protein is UPF0114 protein SO_3997.